A 412-amino-acid chain; its full sequence is Keratin, type I microfibrillar 48 kDa, component 8C-1 (412 aa).

At Ser1 the chain carries N-acetylserine. The interval 1 to 55 (SFNFCLPNLSFRSSCSSRPCVPSSCCGTTLPGACNIPANVGSCNWFCEGSFDGNE) is head. Residues 55–366 (EKETMQFLND…GLLDSEDCKL (312 aa)) form the IF rod domain. Residues 56–90 (KETMQFLNDRLASYLEKVRQLERENAELESRILER) form a coil 1A region. The segment at 91–101 (SQQQEPLVCPN) is linker 1. A coil 1B region spans residues 102–202 (YQSYFRTIEE…HEEEVNTLRS (101 aa)). Positions 203–218 (QLGDRLNVEVDAAPTV) are linker 12. Positions 219–362 (DLNRVLNETR…NTYRGLLDSE (144 aa)) are coil 2. The tail stretch occupies residues 363–412 (DCKLPCNPCATTNACGKTITPCISSPCAPAAPCTPCVPRSRCGPCNSYVR).

It belongs to the intermediate filament family.

Functionally, wool microfibrillar keratin. The sequence is that of Keratin, type I microfibrillar 48 kDa, component 8C-1 from Ovis aries (Sheep).